Consider the following 506-residue polypeptide: 2,3-bisphosphoglycerate-independent phosphoglycerate mutase (506 aa).

Mn(2+) is bound by residues D13 and S63. S63 (phosphoserine intermediate) is an active-site residue. Substrate contacts are provided by residues H124, 153–154 (RD), R183, R189, 254–257 (RADR), and K330. Mn(2+)-binding residues include D396, H400, D437, H438, and H456.

The protein belongs to the BPG-independent phosphoglycerate mutase family. As to quaternary structure, monomer. The cofactor is Mn(2+).

It carries out the reaction (2R)-2-phosphoglycerate = (2R)-3-phosphoglycerate. The protein operates within carbohydrate degradation; glycolysis; pyruvate from D-glyceraldehyde 3-phosphate: step 3/5. In terms of biological role, catalyzes the interconversion of 2-phosphoglycerate and 3-phosphoglycerate. This chain is 2,3-bisphosphoglycerate-independent phosphoglycerate mutase, found in Cereibacter sphaeroides (strain ATCC 17025 / ATH 2.4.3) (Rhodobacter sphaeroides).